Consider the following 855-residue polypeptide: Photoactivated adenylate cyclase subunit beta-like protein 1224-5/9F (855 aa).

Residues 56–149 form the BLUF 1 domain; that stretch reads LRRLMYLSKG…GRMSGVWHMK (94 aa). The interval 420–444 is disordered; that stretch reads RPPIFDDTPKCNPRPRTPGCEGRQR. A BLUF 2 domain is found at 471 to 563; it reads VPTLTYISHA…RVYPSEWTLT (93 aa). The span at 813–827 shows a compositional bias: basic and acidic residues; that stretch reads RSGEKPLTEPEEAKL. The disordered stretch occupies residues 813–855; it reads RSGEKPLTEPEEAKLDFSPGRVRHGDSGRRSNSAQGKLSIQVR. The span at 842 to 855 shows a compositional bias: polar residues; sequence RSNSAQGKLSIQVR.

In terms of assembly, heterotetramer of two alpha and two beta subunits.

The protein localises to the cell projection. It is found in the cilium. The protein resides in the flagellum. The protein is Photoactivated adenylate cyclase subunit beta-like protein 1224-5/9F of Euglena gracilis.